The sequence spans 145 residues: MIEALIVGEMQDVQIGFVKQILSLNLVPRSNNTTCGNNTSLCDFSEMWYGVFLWAVVSSLIFHLPAALLALATLRRHKVARFFPLGILLMGIIGPLFGGVLTSAAIAGVYKAAGKSMFSLEALVFGVGQSLFIFIISFLRILATL.

Residues 1-50 (MIEALIVGEMQDVQIGFVKQILSLNLVPRSNNTTCGNNTSLCDFSEMWYG) lie on the Lumenal side of the membrane. Residues N31 and N37 are each glycosylated (N-linked (GlcNAc...) asparagine). The helical transmembrane segment at 51-71 (VFLWAVVSSLIFHLPAALLAL) threads the bilayer. At 72–81 (ATLRRHKVAR) the chain is on the cytoplasmic side. The helical transmembrane segment at 82 to 102 (FFPLGILLMGIIGPLFGGVLT) threads the bilayer. At 103–117 (SAAIAGVYKAAGKSM) the chain is on the lumenal side. A helical membrane pass occupies residues 118-138 (FSLEALVFGVGQSLFIFIISF). The Cytoplasmic segment spans residues 139–145 (LRILATL).

It belongs to the TMEM170 family.

The protein resides in the endoplasmic reticulum membrane. It localises to the nucleus envelope. In terms of biological role, may regulate membrane morphogenesis in the endoplasmic reticulum (ER) by promoting ER sheet formation at the expense of ER tubules. This Danio rerio (Zebrafish) protein is Transmembrane protein 170A (tmem170a).